Consider the following 292-residue polypeptide: MVAQTPSSPPLWLTIIYLLRWHKPAGRLILMIPALWAVCLAAQGLPPLPLLGTIALGTLATSGLGCVVNDLWDRDIDPQVERTKQRPLAARALSVQVGIGVALVALLCAAGLAFYLTPLSFWLCVAAVPVIVAYPGAKRVFPVPQLVLSIAWGFAVLISWSAVTGDLTDATWVLWGATVFWTLGFDTVYAMADREDDRRIGVNSSALFFGQYVGEAVGIFFALTIGCLFYLGMILMLNPLYWLSLAIAIVGWVIQYIQLSAPTPEPKLYGQIFGQNVIIGFVLLAGMLLGWL.

9 helical membrane passes run 28–48 (LILM…LPPL), 49–69 (PLLG…CVVN), 97–117 (VGIG…FYLT), 118–138 (PLSF…PGAK), 140–160 (VFPV…LISW), 172–192 (WVLW…YAMA), 217–237 (VGIF…ILML), 239–259 (PLYW…YIQL), and 272–292 (IFGQ…LGWL).

Belongs to the UbiA prenyltransferase family. The cofactor is Mg(2+).

Its subcellular location is the cell inner membrane. It carries out the reaction all-trans-nonaprenyl diphosphate + 4-hydroxybenzoate = 4-hydroxy-3-(all-trans-nonaprenyl)benzoate + diphosphate. In terms of biological role, catalyzes the prenylation of para-hydroxybenzoate (PHB) with an all-trans polyprenyl group. Mediates the second step in the final reaction sequence of plastoquinone-9 (PQ-9) biosynthesis, which is the condensation of the polyisoprenoid side chain with PHB, generating the first membrane-bound Q intermediate 4-hydroxy-3-solanesylbenzoate. This is 4-hydroxybenzoate solanesyltransferase from Synechocystis sp. (strain ATCC 27184 / PCC 6803 / Kazusa).